The primary structure comprises 910 residues: MASSAQSSGSSGGPAVPTVQRGIVKMVLSGCAIIVRGQPRGGPPPERQINLSNIRAGNLARRAAATQPDGKDTPDEPWAFPAREFLRKKLIGKEVCFTIENKTPQGREYGMIYLGKDTNGENIAESLVAEGLATRREGMRANNPEQNRLSECEEQAKASKKGMWSEGNGSHTIRDLKYTIENPRHFVDSHHQKPVNAIIEHVRDGSVVRALLLPGHHLVTVMLSGIKCPTFRRETDGSETPEPFAAEAKFFTESRLLQRDVQIILESCHNQNLLGTILHPNGNITELLLKEGFARCVDWSIAVYTRGAEKLRAAERFAKERRLRIWRDYVPPTANLDQKDKQFVAKVMQVLNADAIVVKLNSGDYKTIHLSSIRPPRLEGDNIQDKNKKLRPLYDIPYMFEAREFLRKKLIGKKVNVTVDYIRPASPATETVPAFSERTCATVTIGGINIAEALVSKGLATVIRYRQDDDQRSSHYDELLAAEARAIKNGKGLHSKKEVPIHRVADISGDTQKAKQFLPFLQRAGRSEAVVEYVFSGSRLKLYLPKETCLITFLLAGIECPRGARNLPGLVQEGEPFSEEATLFTKELVLQREVEVEVESMDKAGNFIGWLHMDGANLSVLLVEQALSKVHFTAERSAYYKPLLSAEEAAKQRKEKVWAHYEERPVEEVMPVLEEKERSASYKPVFVTEITDDLHFYVQDVETGTQLEKLMENMRNDISSHPPVEGSYAPRRGEFCIAKFVDGEWYRARVEKVESPAKVHVFYIDYGNREILPSTRLGTLPPAFSTRVLPAQATEYAFAFIQVPQDEDARTDAVDSVVRDIQNTQCLLNVEHLSASCPHVTLQFADSKGDVGLGLVKEGLVMVEVRKEKQFQKVITEYLNAQESAKSARLNLWRYGDFRADDADEFGYSR.

Ala2 carries the N-acetylalanine modification. 3 TNase-like domains span residues Thr18–Glu166, Lys193–Asp328, and Lys341–Lys496. Phosphothreonine is present on Thr103. Lys193 is subject to N6-acetyllysine. 2 positions are modified to phosphothreonine: Thr235 and Thr240. Short sequence motifs (nuclear localization signal) lie at residues Arg321–Ile325 and Lys388–Pro392. The residue at position 426 (Ser426) is a Phosphoserine. Residue Lys513 forms a Glycyl lysine isopeptide (Lys-Gly) (interchain with G-Cter in SUMO2) linkage. Residues Gly525–His660 enclose the TNase-like 4 domain. Lys641 carries the N6-acetyllysine modification. Phosphoserine is present on Ser645. In terms of domain architecture, Tudor spans Ala729–Arg787. Thr779 carries the post-translational modification Phosphothreonine. Phosphoserine is present on residues Ser785 and Ser909.

As to quaternary structure, forms a ternary complex with STAT6 and POLR2A. Associates with the RNA-induced silencing complex (RISC). Interacts with the RISC components AGO2, FMR1 and TNRC6A. Interacts with GTF2E1 and GTF2E2. Interacts with PIM1. Interacts with STAT5. Interacts with SYT11 (via C2 2 domain); the interaction with SYT11 is direct. Post-translationally, phosphorylated by PIM1 in vitro.

The protein resides in the cytoplasm. Its subcellular location is the nucleus. The protein localises to the melanosome. The catalysed reaction is Endonucleolytic cleavage to nucleoside 3'-phosphates and 3'-phosphooligonucleotide end-products.. Its function is as follows. Endonuclease that mediates miRNA decay of both protein-free and AGO2-loaded miRNAs. As part of its function in miRNA decay, regulates mRNAs involved in G1-to-S phase transition. Functions as a bridging factor between STAT6 and the basal transcription factor. Plays a role in PIM1 regulation of MYB activity. Functions as a transcriptional coactivator for STAT5. The protein is Staphylococcal nuclease domain-containing protein 1 (Snd1) of Mus musculus (Mouse).